Reading from the N-terminus, the 410-residue chain is Argininosuccinate synthase (410 aa).

Residues 10–18 and alanine 37 contribute to the ATP site; that span reads AYSGGLDTS. Residues tyrosine 90 and serine 95 each coordinate L-citrulline. Glycine 120 contributes to the ATP binding site. The L-aspartate site is built by threonine 122, asparagine 126, and aspartate 127. Residue asparagine 126 participates in L-citrulline binding. L-citrulline is bound by residues arginine 130, serine 182, serine 191, glutamate 267, and tyrosine 279.

Belongs to the argininosuccinate synthase family. Type 1 subfamily. In terms of assembly, homotetramer.

The protein localises to the cytoplasm. It carries out the reaction L-citrulline + L-aspartate + ATP = 2-(N(omega)-L-arginino)succinate + AMP + diphosphate + H(+). The protein operates within amino-acid biosynthesis; L-arginine biosynthesis; L-arginine from L-ornithine and carbamoyl phosphate: step 2/3. The protein is Argininosuccinate synthase of Polynucleobacter necessarius subsp. necessarius (strain STIR1).